The sequence spans 121 residues: Small ribosomal subunit protein uS13 (121 aa).

Positions 97–121 are disordered; sequence PVRGQKTHSNARTRKGPRASRIKKK. Residues 101-121 show a composition bias toward basic residues; it reads QKTHSNARTRKGPRASRIKKK.

It belongs to the universal ribosomal protein uS13 family. In terms of assembly, part of the 30S ribosomal subunit. Forms a loose heterodimer with protein S19. Forms two bridges to the 50S subunit in the 70S ribosome.

Functionally, located at the top of the head of the 30S subunit, it contacts several helices of the 16S rRNA. In the 70S ribosome it contacts the 23S rRNA (bridge B1a) and protein L5 of the 50S subunit (bridge B1b), connecting the 2 subunits; these bridges are implicated in subunit movement. Contacts the tRNAs in the A and P-sites. The protein is Small ribosomal subunit protein uS13 of Kosmotoga olearia (strain ATCC BAA-1733 / DSM 21960 / TBF 19.5.1).